The sequence spans 115 residues: MKFVLLFGVLLVTFFSYSSAEMLDDFDQADEDELLSLIEKGEARAKECTPRFYDCSHDRHSCCRSELFKDVCTCFYPEGGDNEVCTCQQPKHLKYMEKAADKAKKFGGKIKKWFG.

An N-terminal signal peptide occupies residues 1-20; that stretch reads MKFVLLFGVLLVTFFSYSSA. Positions 21 to 44 are excised as a propeptide; sequence EMLDDFDQADEDELLSLIEKGEAR. 4 disulfides stabilise this stretch: C48/C63, C55/C72, C62/C87, and C74/C85.

It belongs to the neurotoxin 19 (CSTX) family. 01 subfamily. Expressed by the venom gland.

The protein localises to the secreted. The protein is U3-lycotoxin-Ls1a of Lycosa singoriensis (Wolf spider).